We begin with the raw amino-acid sequence, 198 residues long: ATP-dependent Clp protease proteolytic subunit (198 aa).

The active-site Nucleophile is S103. The active site involves H128.

This sequence belongs to the peptidase S14 family. Fourteen ClpP subunits assemble into 2 heptameric rings which stack back to back to give a disk-like structure with a central cavity, resembling the structure of eukaryotic proteasomes.

The protein resides in the cytoplasm. The catalysed reaction is Hydrolysis of proteins to small peptides in the presence of ATP and magnesium. alpha-casein is the usual test substrate. In the absence of ATP, only oligopeptides shorter than five residues are hydrolyzed (such as succinyl-Leu-Tyr-|-NHMec, and Leu-Tyr-Leu-|-Tyr-Trp, in which cleavage of the -Tyr-|-Leu- and -Tyr-|-Trp bonds also occurs).. Cleaves peptides in various proteins in a process that requires ATP hydrolysis. Has a chymotrypsin-like activity. Plays a major role in the degradation of misfolded proteins. The polypeptide is ATP-dependent Clp protease proteolytic subunit (Vesicomyosocius okutanii subsp. Calyptogena okutanii (strain HA)).